The chain runs to 154 residues: Interleukin-7 (154 aa).

The signal sequence occupies residues 1 to 25 (MFHVSFRYIFGIPPLILVLLPVTSS). Cystine bridges form between C27–C145, C58–C133, and C71–C116. N-linked (GlcNAc...) asparagine glycosylation is found at N94 and N115.

The protein belongs to the IL-7/IL-9 family. In terms of assembly, interacts with IL7R and CSF2RG. Three disulfide bonds are present.

The protein localises to the secreted. Functionally, hematopoietic cytokine that plays an essential role in the development, expansion, and survival of naive and memory T-cells and B-cells thereby regulating the number of mature lymphocytes and maintaining lymphoid homeostasis. Mechanistically, exerts its biological effects through a receptor composed of IL7RA subunit and the cytokine receptor common subunit gamma/CSF2RG. Binding to the receptor leads to activation of various kinases including JAK1 or JAK3 depending on the cell type and subsequently propagation of signals through activation of several downstream signaling pathways including the PI3K/Akt/mTOR or the JAK-STAT5. This chain is Interleukin-7 (Il7), found in Mus musculus (Mouse).